The following is a 172-amino-acid chain: Cyclin-L1 (172 aa).

A disordered region spans residues 1–36 (MASGPHSTATAAAAASSAAPSAGGSSSGTTTTTTTT). The tract at residues 88-168 (ELIQAAGILL…LRGKSDQLHL (81 aa)) is cyclin-like.

Belongs to the cyclin family. Cyclin L subfamily. As to quaternary structure, interacts with POLR2A via its hyperphosphorylated C-terminal domain (CTD). Interacts with CDK11A, CDK11B, CDK12 and CDK13. May form a ternary complex with CDK11B and casein kinase II (CKII). Interacts with pre-mRNA-splicing factors, including at least SRSF1, SRSF2 and SRSF7/SLU7.

It localises to the nucleus speckle. Its subcellular location is the nucleus. It is found in the nucleoplasm. Its function is as follows. Involved in pre-mRNA splicing. Functions in association with cyclin-dependent kinases (CDKs). May play a role in the regulation of RNA polymerase II (pol II). Inhibited by the CDK-specific inhibitor CDKN1A/p21. This chain is Cyclin-L1 (CCNL1), found in Pongo abelii (Sumatran orangutan).